Reading from the N-terminus, the 89-residue chain is Mu-like prophage FluMu DNA-binding protein Ner (89 aa).

The segment at residues 57–76 (ERLVANAIGVPPEVIWAGRF) is a DNA-binding region (H-T-H motif).

It belongs to the ner transcriptional regulatory family.

In terms of biological role, negative regulator of transcription starting from the Pe and Pc promoters of Mu. Also negatively regulates its own gene transcription. This Haemophilus influenzae (strain ATCC 51907 / DSM 11121 / KW20 / Rd) protein is Mu-like prophage FluMu DNA-binding protein Ner (nlp).